Here is a 351-residue protein sequence, read N- to C-terminus: Putative glycosyltransferase 45 (351 aa).

Belongs to the glycosyltransferase group 1 family.

This Sulfolobus islandicus filamentous virus (isolate Iceland/Hveragerdi) (SIFV) protein is Putative glycosyltransferase 45 (SIFV0045).